A 507-amino-acid chain; its full sequence is Putative thymidine phosphorylase (507 aa).

This sequence belongs to the thymidine/pyrimidine-nucleoside phosphorylase family. Type 2 subfamily.

The catalysed reaction is thymidine + phosphate = 2-deoxy-alpha-D-ribose 1-phosphate + thymine. This Ralstonia nicotianae (strain ATCC BAA-1114 / GMI1000) (Ralstonia solanacearum) protein is Putative thymidine phosphorylase.